A 400-amino-acid chain; its full sequence is MAKEKFVRTKPHMNVGTIGHIDHGKTTLTAAITKYCSLFGWADYTPYEMIDKAPEERARGITINITHVEYQTEKRHYAHIDCPGHADYIKNMITGAAQMDGAILVVAATDGPMPQTREHVLLARQVNVPAMIVFINKVDMVDDPELVDLVEMEVRDLLSKYEFPGDELPVIRGSALKAVEAPNDPNHPDLKAIKELLDAMDSYFPDPVREVDKPFLMPVEDVFTITGRGTVVTGRIERGVIKPGVEAEIIGMSYETKKTVITSVEMFRKELDEAMAGDNVGCLLRGVDKDEVERGQVIAKPGSITPHKKFKANIYVLKKEEGGRHTPFTKGYKPQFYIRTADVTGEIVDLPAGVEMVMPGDNVEMTIELIYPVAIEKGMRFAVREGGRTVGAGVVSEIIE.

Residues 10 to 208 form the tr-type G domain; that stretch reads KPHMNVGTIG…AMDSYFPDPV (199 aa). The segment at 19–26 is G1; the sequence is GHIDHGKT. Residue 19-26 coordinates GTP; it reads GHIDHGKT. Thr-26 lines the Mg(2+) pocket. The segment at 60–64 is G2; that stretch reads GITIN. Residues 81–84 form a G3 region; that stretch reads DCPG. GTP is bound by residues 81–85 and 136–139; these read DCPGH and NKVD. Positions 136–139 are G4; the sequence is NKVD. The segment at 174–176 is G5; sequence SAL.

The protein belongs to the TRAFAC class translation factor GTPase superfamily. Classic translation factor GTPase family. EF-Tu/EF-1A subfamily. Monomer.

The protein resides in the cytoplasm. The enzyme catalyses GTP + H2O = GDP + phosphate + H(+). In terms of biological role, GTP hydrolase that promotes the GTP-dependent binding of aminoacyl-tRNA to the A-site of ribosomes during protein biosynthesis. This Fervidobacterium nodosum (strain ATCC 35602 / DSM 5306 / Rt17-B1) protein is Elongation factor Tu.